We begin with the raw amino-acid sequence, 369 residues long: Iron-sulfur cluster assembly SufBD family protein AF_2365 (369 aa).

Belongs to the iron-sulfur cluster assembly SufBD family.

In Archaeoglobus fulgidus (strain ATCC 49558 / DSM 4304 / JCM 9628 / NBRC 100126 / VC-16), this protein is Iron-sulfur cluster assembly SufBD family protein AF_2365.